An 80-amino-acid chain; its full sequence is CLAVATA3/ESR (CLE)-related protein 40 (80 aa).

Residues 1-25 form the signal peptide; it reads MAAMKYKGSVFIILVILLLSSSLLA. The disordered stretch occupies residues 45-80; the sequence is MKKEKKIDGGTANEVEERQVPTGSDPLHHKHIPFTP. Hydroxyproline is present on Pro-65.

The protein belongs to the CLV3/ESR signal peptide family. Mostly expressed at low levels in stems and apex, and, to a lower extent, in roots, seedlings, leaves, flowers, siliques and pollen.

It localises to the secreted. The protein resides in the extracellular space. In terms of biological role, extracellular signal peptide secreted by differentiated root cells that regulates root cell fate. Acts with ACR4 as a ligand-receptor pair in a signal transduction pathway, coordinating movement of the root tip and organization of cell divisions in the root meristem. Promotes cell differentiation in the distal root meristem in a dose-dependent manner, especially the transition from columella stem cells (CSC) daughters into columella cells (CCs). Induces ACR4 expression in root quiescent center (QC). Involved in WUX5 QC-specific expression pattern regulation. Regulates the transition of protophloem cells from proliferation to differentiation, thus impinging on postembryonic growth capacity of the root meristem; this signaling pathway requires CRN and CLV2. The chain is CLAVATA3/ESR (CLE)-related protein 40 from Arabidopsis thaliana (Mouse-ear cress).